A 358-amino-acid polypeptide reads, in one-letter code: Magnesium-protoporphyrin IX monomethyl ester [oxidative] cyclase (358 aa).

The protein belongs to the AcsF family. It depends on Fe cation as a cofactor.

The enzyme catalyses Mg-protoporphyrin IX 13-monomethyl ester + 3 NADPH + 3 O2 + 2 H(+) = 3,8-divinyl protochlorophyllide a + 3 NADP(+) + 5 H2O. It functions in the pathway porphyrin-containing compound metabolism; chlorophyll biosynthesis (light-independent). Functionally, catalyzes the formation of the isocyclic ring in chlorophyll biosynthesis. Mediates the cyclase reaction, which results in the formation of divinylprotochlorophyllide (Pchlide) characteristic of all chlorophylls from magnesium-protoporphyrin IX 13-monomethyl ester (MgPMME). The chain is Magnesium-protoporphyrin IX monomethyl ester [oxidative] cyclase from Synechococcus elongatus (strain ATCC 33912 / PCC 7942 / FACHB-805) (Anacystis nidulans R2).